Here is a 526-residue protein sequence, read N- to C-terminus: Peptide chain release factor 3 (526 aa).

Positions 8–277 (GKRRTFAIIS…GLTDWAPAPQ (270 aa)) constitute a tr-type G domain. Residues 17-24 (SHPDAGKT), 85-89 (DTPGH), and 139-142 (NKLD) each bind GTP.

Belongs to the TRAFAC class translation factor GTPase superfamily. Classic translation factor GTPase family. PrfC subfamily.

Its subcellular location is the cytoplasm. Functionally, increases the formation of ribosomal termination complexes and stimulates activities of RF-1 and RF-2. It binds guanine nucleotides and has strong preference for UGA stop codons. It may interact directly with the ribosome. The stimulation of RF-1 and RF-2 is significantly reduced by GTP and GDP, but not by GMP. The sequence is that of Peptide chain release factor 3 from Aliivibrio fischeri (strain MJ11) (Vibrio fischeri).